A 113-amino-acid polypeptide reads, in one-letter code: Sensorin-A (113 aa).

An N-terminal signal peptide occupies residues 1-32 (MPSRAATSPLNVQMMVVLCIVCLALQAVAANA). Position 54 is a phenylalanine amide (Phe54). Positions 58-113 (SSSETYSTNLINLLSRQLVSQEELRAILEKQPILLDEVVKILDRNDDGYITVADLL) are excised as a propeptide. An EF-hand domain is found at 87 to 113 (KQPILLDEVVKILDRNDDGYITVADLL). Asp100, Asn102, Asp104, Tyr106, and Asp111 together coordinate Ca(2+).

In terms of tissue distribution, seems to be specific to the mechanosensory neurons of the central nervous system.

The protein localises to the secreted. In terms of biological role, may function as an inhibitory cotransmitter acting in conjunction with the fast excitatory transmitter released by sensory neurons. The peptide selectively inhibits certain postsynaptic cells probably by means of sensorin A release. This is Sensorin-A (PSC1) from Aplysia californica (California sea hare).